Consider the following 185-residue polypeptide: MANVIIEKAKERMTQSHQSLAREFGGIRAGRANASLLDRVHVEYYGVETPLNQIASITIPEARVLLVTPFDKSSLKDIDRALNASDLGITPANDGSVIRLVIPALTEETRRDLAKEVKKVGENAKVAVRNIRRDAMDEAKKQEKAKEITEDELKTLEKDIQKVTDDAVKHIDDMTANKEKELLEV.

Belongs to the RRF family.

The protein resides in the cytoplasm. Functionally, responsible for the release of ribosomes from messenger RNA at the termination of protein biosynthesis. May increase the efficiency of translation by recycling ribosomes from one round of translation to another. This is Ribosome-recycling factor from Streptococcus pneumoniae serotype 2 (strain D39 / NCTC 7466).